We begin with the raw amino-acid sequence, 1819 residues long: Non-reducing polyketide synthase nscA (1819 aa).

The interval 25–277 (RRLDQHSKDR…PLPVYDGLCH (253 aa)) is N-terminal acylcarrier protein transacylase domain (SAT). The 434-residue stretch at 413–846 (SSKLAIVGMA…GGNTTLLLED (434 aa)) folds into the Ketosynthase family 3 (KS3) domain. Catalysis depends on for beta-ketoacyl synthase activity residues C586, H721, and H764. The interval 952 to 1249 (FTSQGAYYHG…MIPSAPAMSS (298 aa)) is malonyl-CoA:ACP transacylase (MAT) domain. Positions 1339–1658 (TSLVHQITAE…RLLMDRFFSP (320 aa)) are product template (PT) domain. Residues 1343-1479 (HQITAETVEA…AMIRFEDPMA (137 aa)) form an N-terminal hotdog fold region. The region spanning 1343-1653 (HQITAETVEA…IRRVPRLLMD (311 aa)) is the PKS/mFAS DH domain. H1375 acts as the Proton acceptor; for dehydratase activity in catalysis. The interval 1507–1653 (ASRLSKPLAY…IRRVPRLLMD (147 aa)) is C-terminal hotdog fold. The active-site Proton donor; for dehydratase activity is D1564. Positions 1703 to 1742 (SSTMASKAPEPAPLLATSSESSTPKESPIVTPAESEREDP) are disordered. Low complexity predominate over residues 1719–1730 (TSSESSTPKESP). Positions 1742 to 1819 (PVDNNMISQC…EMTAWIEEYC (78 aa)) constitute a Carrier domain. O-(pantetheine 4'-phosphoryl)serine is present on S1779.

The cofactor is pantetheine 4'-phosphate.

The protein operates within secondary metabolite biosynthesis. Its function is as follows. Non-reducing polyketide synthase; part of the gene cluster that mediates the biosynthesis of neosartoricin B, a prenylated anthracenone that probably exhibits T-cell antiproliferative activity, suggestive of a physiological role as an immunosuppressive agent. The non-reducing polyketide synthase nscA probably synthesizes and cyclizes the decaketide backbone. The hydrolase nscB then mediates the product release through hydrolysis followed by spontaneous decarboxylation. The prenyltransferase nscD catalyzes the addition of the dimethylallyl group to the aromatic C5. The FAD-dependent monooxygenase nscC is then responsible for the stereospecific hydroxylation at C2. Neosartoricin B can be converted into two additional compounds neosartoricins C and D. Neosartoricin C is a spirocyclic compound that is cyclized through the attack of C3 hydroxyl on C14, followed by dehydration. On the other hand, neosartoricin D is a further cyclized compound in which attack of C2 on C14 in neosartoricin C results in the formation of the acetal-containing dioxabicyclo-octanone ring. Both of these compounds are novel and possibly represent related metabolites of the gene cluster. This Trichophyton verrucosum (strain HKI 0517) protein is Non-reducing polyketide synthase nscA.